We begin with the raw amino-acid sequence, 361 residues long: Phosphoserine aminotransferase (361 aa).

L-glutamate is bound at residue arginine 42. Pyridoxal 5'-phosphate is bound by residues 76 to 77, tryptophan 102, threonine 153, aspartate 173, and glutamine 196; that span reads AR. Lysine 197 carries the N6-(pyridoxal phosphate)lysine modification. 238 to 239 is a binding site for pyridoxal 5'-phosphate; that stretch reads NT.

Belongs to the class-V pyridoxal-phosphate-dependent aminotransferase family. SerC subfamily. As to quaternary structure, homodimer. Requires pyridoxal 5'-phosphate as cofactor.

The protein resides in the cytoplasm. The enzyme catalyses O-phospho-L-serine + 2-oxoglutarate = 3-phosphooxypyruvate + L-glutamate. It catalyses the reaction 4-(phosphooxy)-L-threonine + 2-oxoglutarate = (R)-3-hydroxy-2-oxo-4-phosphooxybutanoate + L-glutamate. It functions in the pathway amino-acid biosynthesis; L-serine biosynthesis; L-serine from 3-phospho-D-glycerate: step 2/3. It participates in cofactor biosynthesis; pyridoxine 5'-phosphate biosynthesis; pyridoxine 5'-phosphate from D-erythrose 4-phosphate: step 3/5. Its function is as follows. Catalyzes the reversible conversion of 3-phosphohydroxypyruvate to phosphoserine and of 3-hydroxy-2-oxo-4-phosphonooxybutanoate to phosphohydroxythreonine. This Buchnera aphidicola subsp. Acyrthosiphon pisum (strain Tuc7) protein is Phosphoserine aminotransferase.